We begin with the raw amino-acid sequence, 551 residues long: MHHLHPMIVCIFVMYTGIVGSDAIAGDQLLNIGVIQSKIRSLMYYTDGGASFIVVKLLPNLPPSNGTCNITSLDAYNVTLFKLLTPLIENLSKISTVTDTKTRQKRFAGVVVGLAALGVATAAQITAAVAIVKANANAAAINNLASSIQSTNKAVSDVIDASRTIATAVQAIQDHINGAIVNGITSASCRAHDALIGSILNLYLTELTTIFHNQITNPALTPLSIQALRILLGSTLPIVIESKLNTNLNTAELLSSGLLTGQIISISPMYMQMLIQINVPTFIMQPGAKVIDLIAISANHKLQEVVVQVPNRILEYANELQNYPANDCVVTPNSVCCRYNEGSPIPESQYQCLRGNLNSCTFTPIIGNFLKRFAFANGVLYANCKSLLCRCADPPHVVSQDDTQGISIIDIKRCSEMMLDTFSFRITSTFNATYVTDFSMINANIVHLSPLDLSNQINSINKSLKSAEDWIADSNFFANQARTAKTLYSLSAIALILSVITLVVVGLLIAYIIKLVSQIHQFRSLAATTMFHRENPAFFSKNNHGNIYGIS.

The signal sequence occupies residues 1 to 23; that stretch reads MHHLHPMIVCIFVMYTGIVGSDA. Residues 24–492 are Extracellular-facing; the sequence is IAGDQLLNIG…TAKTLYSLSA (469 aa). N-linked (GlcNAc...) asparagine; by host glycosylation is found at Asn-65, Asn-69, Asn-77, and Asn-90. 5 disulfides stabilise this stretch: Cys-68–Cys-189, Cys-328–Cys-337, Cys-352–Cys-360, Cys-384–Cys-389, and Cys-391–Cys-414. Positions 107–131 are fusion peptide; that stretch reads FAGVVVGLAALGVATAAQITAAVAI. Positions 132 to 160 form a coiled coil; sequence VKANANAAAINNLASSIQSTNKAVSDVID. Residues Asn-431 and Asn-461 are each glycosylated (N-linked (GlcNAc...) asparagine; by host). Residues 456-481 adopt a coiled-coil conformation; sequence QINSINKSLKSAEDWIADSNFFANQA. Residues 493–513 traverse the membrane as a helical segment; the sequence is IALILSVITLVVVGLLIAYII. Topologically, residues 514–551 are cytoplasmic; the sequence is KLVSQIHQFRSLAATTMFHRENPAFFSKNNHGNIYGIS.

This sequence belongs to the paramyxoviruses fusion glycoprotein family. In terms of assembly, homotrimer of disulfide-linked F1-F2. Post-translationally, the inactive precursor F0 is glycosylated and proteolytically cleaved into F1 and F2 to be functionally active. The cleavage is mediated by cellular proteases during the transport and maturation of the polypeptide.

It localises to the virion membrane. It is found in the host cell membrane. Class I viral fusion protein. Under the current model, the protein has at least 3 conformational states: pre-fusion native state, pre-hairpin intermediate state, and post-fusion hairpin state. During viral and plasma cell membrane fusion, the heptad repeat (HR) regions assume a trimer-of-hairpins structure, positioning the fusion peptide in close proximity to the C-terminal region of the ectodomain. The formation of this structure appears to drive apposition and subsequent fusion of viral and plasma cell membranes. Directs fusion of viral and cellular membranes leading to delivery of the nucleocapsid into the cytoplasm. This fusion is pH independent and occurs directly at the outer cell membrane. The trimer of F1-F2 (F protein) probably interacts with HN at the virion surface. Upon HN binding to its cellular receptor, the hydrophobic fusion peptide is unmasked and interacts with the cellular membrane, inducing the fusion between cell and virion membranes. Later in infection, F proteins expressed at the plasma membrane of infected cells could mediate fusion with adjacent cells to form syncytia, a cytopathic effect that could lead to tissue necrosis. The protein is Fusion glycoprotein F0 (F) of Human parainfluenza 2 virus (strain Greer) (HPIV-2).